Here is a 141-residue protein sequence, read N- to C-terminus: Pancreatic progenitor cell differentiation and proliferation factor-like protein (141 aa).

Residues 72 to 141 are disordered; that stretch reads DQSACGGNGP…GAPKDTNSPQ (70 aa). A compositionally biased stretch (low complexity) spans 95-105; sequence SLLQQEESQLL. Positions 112–122 are enriched in polar residues; that stretch reads GTVNRFRNSQT.

Belongs to the PPDPF family.

The protein is Pancreatic progenitor cell differentiation and proliferation factor-like protein of Bos taurus (Bovine).